Here is a 205-residue protein sequence, read N- to C-terminus: MTKRSEAKYKIDRRMGQNIWGRPKSPVNRREYGPGQHGQRRKGKLSDFGVQLRAKQKLKGYYANISERQFHAIYVEATRLKGDSGENLIGLLERRLDTVVYRSKFVSTMFAARQFINHGHIKVNGKRVNISSYKVRVGDVIEVKEASKQLAIVLEANQLAERDVPDYIDVDHNKMTAKFGRIPALSDVPFAVQMEPHLIVEFYSR.

The disordered stretch occupies residues Asn18 to Ser46. The region spanning Arg94–Asn157 is the S4 RNA-binding domain.

It belongs to the universal ribosomal protein uS4 family. Part of the 30S ribosomal subunit. Contacts protein S5. The interaction surface between S4 and S5 is involved in control of translational fidelity.

In terms of biological role, one of the primary rRNA binding proteins, it binds directly to 16S rRNA where it nucleates assembly of the body of the 30S subunit. With S5 and S12 plays an important role in translational accuracy. This Rhodopseudomonas palustris (strain BisB5) protein is Small ribosomal subunit protein uS4.